The chain runs to 508 residues: Photosystem II CP47 reaction center protein (508 aa).

6 consecutive transmembrane segments (helical) span residues 21–36 (SVHIMHTALVAGWAGS), 101–115 (IVFSGLCFLAAIWHW), 140–156 (GIHLFLSGVACFGFGAF), 203–218 (IAAGTLGILAGLFHLS), 237–252 (VLSSSIAAVFFAAFVV), and 457–472 (SFALLFFFGHIWHGSR).

Belongs to the PsbB/PsbC family. PsbB subfamily. In terms of assembly, PSII is composed of 1 copy each of membrane proteins PsbA, PsbB, PsbC, PsbD, PsbE, PsbF, PsbH, PsbI, PsbJ, PsbK, PsbL, PsbM, PsbT, PsbX, PsbY, PsbZ, Psb30/Ycf12, at least 3 peripheral proteins of the oxygen-evolving complex and a large number of cofactors. It forms dimeric complexes. The cofactor is Binds multiple chlorophylls. PSII binds additional chlorophylls, carotenoids and specific lipids..

The protein localises to the plastid. It localises to the chloroplast thylakoid membrane. In terms of biological role, one of the components of the core complex of photosystem II (PSII). It binds chlorophyll and helps catalyze the primary light-induced photochemical processes of PSII. PSII is a light-driven water:plastoquinone oxidoreductase, using light energy to abstract electrons from H(2)O, generating O(2) and a proton gradient subsequently used for ATP formation. The chain is Photosystem II CP47 reaction center protein from Fagopyrum esculentum subsp. ancestrale (Wild buckwheat).